A 731-amino-acid chain; its full sequence is Vezatin (731 aa).

2 consecutive transmembrane segments (helical) span residues 91-111 (LATP…LLVM) and 114-134 (TWWI…YLVI). Residues 382-414 (VRSLQLHLKALLNEVIILEDELEKLVCTKETQE) adopt a coiled-coil conformation. 2 disordered regions span residues 570–671 (PVDP…DSLQ) and 710–731 (QTFG…IEEK). Polar residues predominate over residues 577–586 (ISNSEPSMNS). The span at 590 to 601 (KVSKNDTEEESS) shows a compositional bias: basic and acidic residues. Polar residues predominate over residues 658–671 (GLTTAPPTPRDSLQ). Over residues 712–721 (FGDEEEEQII) the composition is skewed to acidic residues. The span at 722–731 (EENKNKIEEK) shows a compositional bias: basic and acidic residues.

It belongs to the vezatin family. In terms of assembly, interacts with USH2A (via the cytoplasmic region); the interaction associates VEZT with the USH2 complex at the stereocilia base. Interacts with myosin MYO7A and the cadherin-catenins complex.

The protein localises to the cell membrane. Its subcellular location is the cell projection. It localises to the stereocilium membrane. The protein resides in the cell junction. It is found in the adherens junction. The protein localises to the nucleus. Its subcellular location is the cytoplasmic vesicle. It localises to the secretory vesicle. The protein resides in the acrosome. Plays a pivotal role in the establishment of adherens junctions and their maintenance in adult life. Required for morphogenesis of the preimplantation embryo, and for the implantation process. The chain is Vezatin (VEZT) from Pongo abelii (Sumatran orangutan).